A 94-amino-acid polypeptide reads, in one-letter code: Large ribosomal subunit protein bL27 (94 aa).

A propeptide spanning residues 1–9 (MLRLDLQFF) is cleaved from the precursor.

It belongs to the bacterial ribosomal protein bL27 family. In terms of processing, the N-terminus is cleaved by ribosomal processing cysteine protease Prp.

This chain is Large ribosomal subunit protein bL27, found in Bacillus velezensis (strain DSM 23117 / BGSC 10A6 / LMG 26770 / FZB42) (Bacillus amyloliquefaciens subsp. plantarum).